The following is a 330-amino-acid chain: Mitochondrial glycine transporter (330 aa).

Solcar repeat units lie at residues 11-94, 122-206, and 234-318; these read SSSY…LRQN, LSNL…LKKR, and TSAS…LIRR. Helical transmembrane passes span 17–42, 69–95, 128–153, 181–204, 238–264, and 293–311; these read FTAG…TRLQ, GTVP…RQNV, LTTG…VRYE, GFGA…EQLK, INFG…KTRI, and GLGL…AWTI.

It belongs to the mitochondrial carrier (TC 2.A.29) family. SLC25A38 subfamily.

Its subcellular location is the mitochondrion inner membrane. The catalysed reaction is glycine(in) = glycine(out). Functionally, mitochondrial glycine transporter that imports glycine into the mitochondrial matrix. Plays an important role in providing glycine for the first enzymatic step in heme biosynthesis, the condensation of glycine with succinyl-CoA to produce 5-aminolevulinate (ALA) in the mitochondrial matrix. This chain is Mitochondrial glycine transporter, found in Sclerotinia sclerotiorum (strain ATCC 18683 / 1980 / Ss-1) (White mold).